We begin with the raw amino-acid sequence, 295 residues long: Bifunctional protein FolD (295 aa).

Residues 166 to 168 (GRS), Ser191, and Ile232 contribute to the NADP(+) site.

Belongs to the tetrahydrofolate dehydrogenase/cyclohydrolase family. Homodimer.

It catalyses the reaction (6R)-5,10-methylene-5,6,7,8-tetrahydrofolate + NADP(+) = (6R)-5,10-methenyltetrahydrofolate + NADPH. The catalysed reaction is (6R)-5,10-methenyltetrahydrofolate + H2O = (6R)-10-formyltetrahydrofolate + H(+). It participates in one-carbon metabolism; tetrahydrofolate interconversion. Its function is as follows. Catalyzes the oxidation of 5,10-methylenetetrahydrofolate to 5,10-methenyltetrahydrofolate and then the hydrolysis of 5,10-methenyltetrahydrofolate to 10-formyltetrahydrofolate. This Rhodopseudomonas palustris (strain BisB5) protein is Bifunctional protein FolD.